The following is a 230-amino-acid chain: Thymidylate kinase (230 aa).

23 to 30 (GIDGAGKT) serves as a coordination point for ATP.

The protein belongs to the thymidylate kinase family.

It catalyses the reaction dTMP + ATP = dTDP + ADP. Functionally, phosphorylation of dTMP to form dTDP in both de novo and salvage pathways of dTTP synthesis. The sequence is that of Thymidylate kinase from Ureaplasma parvum serovar 3 (strain ATCC 27815 / 27 / NCTC 11736).